Reading from the N-terminus, the 605-residue chain is uncharacterized protein (605 aa).

A disordered region spans residues 111–151; it reads VNVNDGKPNDIELSSTSKTENDPPLSLHTTPDDLQGNGVNV.

The protein resides in the golgi apparatus. This is an uncharacterized protein from Schizosaccharomyces pombe (strain 972 / ATCC 24843) (Fission yeast).